The sequence spans 645 residues: Crossover junction endonuclease mus-81 (645 aa).

2 disordered regions span residues 98–119 (LAAAGAVQDEQPPPPKRARTAR) and 219–310 (GVAG…EDRK). Residues 223-252 (SANTSRNAIASGSGTSNPNRSENVNPNRQD) are compositionally biased toward polar residues. Positions 296-305 (DSDDEDPKYD) are enriched in acidic residues. One can recognise an ERCC4 domain in the interval 353-459 (ELVLDTREVQ…NVVYIIENYN (107 aa)).

It belongs to the XPF family. In terms of assembly, interacts with eme-1. Mg(2+) serves as cofactor.

Its subcellular location is the nucleus. Functionally, interacts with eme-1 to form a DNA structure-specific endonuclease with substrate preference for branched DNA structures with a 5'-end at the branch nick. Typical substrates include 3'-flap structures, D-loops, replication forks and nicked Holliday junctions. May be required in mitosis for the processing of stalled or collapsed replication fork intermediates. May be required in meiosis for the repair of meiosis-specific double strand breaks subsequent to single-end invasion (SEI). This Neurospora crassa (strain ATCC 24698 / 74-OR23-1A / CBS 708.71 / DSM 1257 / FGSC 987) protein is Crossover junction endonuclease mus-81 (mus-81).